We begin with the raw amino-acid sequence, 202 residues long: DNA polymerase III subunit epsilon (202 aa).

Residues D23 and E25 each coordinate a divalent metal cation. D23 and E25 together coordinate substrate. Residue H162 is the Proton acceptor of the active site. A divalent metal cation is bound at residue D167. D167 lines the substrate pocket.

In terms of assembly, DNA polymerase III contains a core (composed of alpha, epsilon and theta chains) that associates with a tau subunit. This core dimerizes to form the POLIII' complex. PolIII' associates with the gamma complex (composed of gamma, delta, delta', psi and chi chains) and with the beta chain to form the complete DNA polymerase III complex. Requires Mg(2+) as cofactor. The cofactor is Mn(2+).

The catalysed reaction is DNA(n) + a 2'-deoxyribonucleoside 5'-triphosphate = DNA(n+1) + diphosphate. Its function is as follows. DNA polymerase III is a complex, multichain enzyme responsible for most of the replicative synthesis in bacteria. The epsilon subunit contain the editing function and is a proofreading 3'-5' exonuclease. This Aquifex aeolicus (strain VF5) protein is DNA polymerase III subunit epsilon (dnaQ).